We begin with the raw amino-acid sequence, 346 residues long: Elongation factor Ts (346 aa).

The segment at 80–83 (TDFV) is involved in Mg(2+) ion dislocation from EF-Tu.

It belongs to the EF-Ts family.

The protein resides in the cytoplasm. Its function is as follows. Associates with the EF-Tu.GDP complex and induces the exchange of GDP to GTP. It remains bound to the aminoacyl-tRNA.EF-Tu.GTP complex up to the GTP hydrolysis stage on the ribosome. The sequence is that of Elongation factor Ts from Streptococcus uberis (strain ATCC BAA-854 / 0140J).